A 182-amino-acid chain; its full sequence is ATP synthase subunit delta (182 aa).

Belongs to the ATPase delta chain family. As to quaternary structure, F-type ATPases have 2 components, F(1) - the catalytic core - and F(0) - the membrane proton channel. F(1) has five subunits: alpha(3), beta(3), gamma(1), delta(1), epsilon(1). F(0) has three main subunits: a(1), b(2) and c(10-14). The alpha and beta chains form an alternating ring which encloses part of the gamma chain. F(1) is attached to F(0) by a central stalk formed by the gamma and epsilon chains, while a peripheral stalk is formed by the delta and b chains.

It localises to the cell inner membrane. Functionally, f(1)F(0) ATP synthase produces ATP from ADP in the presence of a proton or sodium gradient. F-type ATPases consist of two structural domains, F(1) containing the extramembraneous catalytic core and F(0) containing the membrane proton channel, linked together by a central stalk and a peripheral stalk. During catalysis, ATP synthesis in the catalytic domain of F(1) is coupled via a rotary mechanism of the central stalk subunits to proton translocation. Its function is as follows. This protein is part of the stalk that links CF(0) to CF(1). It either transmits conformational changes from CF(0) to CF(1) or is implicated in proton conduction. The protein is ATP synthase subunit delta of Histophilus somni (strain 2336) (Haemophilus somnus).